The chain runs to 80 residues: Defensin-like protein 14 (80 aa).

Residues 1-29 (MAKSAAIITFLFAALVLFAAFEAPIMVEA) form the signal peptide. Position 30 is a pyrrolidone carboxylic acid (Q30). 4 cysteine pairs are disulfide-bonded: C33–C80, C44–C65, C50–C74, and C54–C76.

This sequence belongs to the DEFL family.

The protein resides in the secreted. Confers broad-spectrum resistance to pathogens. Has antifungal activity in vitro. The protein is Defensin-like protein 14 (PDF1.3) of Arabidopsis thaliana (Mouse-ear cress).